Consider the following 332-residue polypeptide: D-galactose/methyl-galactoside binding periplasmic protein MglB (332 aa).

The first 23 residues, 1-23 (MNKKVLTLSAVMASMLFGAAAHA), serve as a signal peptide directing secretion. 2 residues coordinate beta-D-galactose: Asp-37 and Asn-114. The beta-D-glucose site is built by Asp-37 and Asn-114. Asp-157, Asn-159, Asp-161, Gln-163, and Gln-165 together coordinate Ca(2+). Residues His-175, Asp-177, and Arg-181 each contribute to the beta-D-galactose site. Residues His-175, Asp-177, and Arg-181 each contribute to the beta-D-glucose site. Glu-228 is a Ca(2+) binding site. Beta-D-galactose is bound by residues Asn-234, Asp-259, and Asn-279. Residues Asn-234, Asp-259, and Asn-279 each coordinate beta-D-glucose.

The protein belongs to the bacterial solute-binding protein 2 family. The ABC transporter complex is composed of one ATP-binding protein (MglA), two transmembrane proteins (MglC) and a solute-binding protein (MglB).

The protein localises to the periplasm. Its function is as follows. Part of the ABC transporter complex MglABC involved in galactose/methyl galactoside import. In addition, binds D-galactose and D-glucose and plays a role in the chemotaxis towards these two sugars by interacting with the Trg chemoreceptor. The sequence is that of D-galactose/methyl-galactoside binding periplasmic protein MglB (mglB) from Escherichia coli O6:H1 (strain CFT073 / ATCC 700928 / UPEC).